Reading from the N-terminus, the 160-residue chain is Cyclic pyranopterin monophosphate synthase (160 aa).

Residues 76-78 (LCH) and 114-115 (ME) each bind substrate. Asp-129 is a catalytic residue.

This sequence belongs to the MoaC family. As to quaternary structure, homohexamer; trimer of dimers.

It carries out the reaction (8S)-3',8-cyclo-7,8-dihydroguanosine 5'-triphosphate = cyclic pyranopterin phosphate + diphosphate. It functions in the pathway cofactor biosynthesis; molybdopterin biosynthesis. Its function is as follows. Catalyzes the conversion of (8S)-3',8-cyclo-7,8-dihydroguanosine 5'-triphosphate to cyclic pyranopterin monophosphate (cPMP). This Vibrio cholerae serotype O1 (strain ATCC 39541 / Classical Ogawa 395 / O395) protein is Cyclic pyranopterin monophosphate synthase.